The sequence spans 878 residues: Aminopeptidase M1-A (878 aa).

The tract at residues 105–212 is required for membrane association; it reads VGEGTLVIAF…MSTYLVAVIV (108 aa). Residues Glu145 and 278–282 each bind substrate; that span reads GAMEN. His314 is a binding site for Zn(2+). The active-site Proton acceptor is Glu315. Zn(2+) contacts are provided by His318 and Glu337. The short motif at 727-728 is the Dileucine internalization motif element; the sequence is LL.

The protein belongs to the peptidase M1 family. As to quaternary structure, homodimer. Zn(2+) is required as a cofactor.

The protein resides in the membrane. Its subcellular location is the microsome membrane. The protein localises to the cytoplasm. The enzyme catalyses Release of an N-terminal amino acid, Xaa-|-Yaa- from a peptide, amide or arylamide. Xaa is preferably Ala, but may be most amino acids including Pro (slow action). When a terminal hydrophobic residue is followed by a prolyl residue, the two may be released as an intact Xaa-Pro dipeptide.. This Oryza sativa subsp. japonica (Rice) protein is Aminopeptidase M1-A.